A 401-amino-acid chain; its full sequence is Subtilisin-like protease 7 (401 aa).

An N-terminal signal peptide occupies residues 1 to 20 (MGFITKAIPLALAAASVING). Positions 21-119 (AEILETRAGV…IERDARVQIN (99 aa)) are excised as a propeptide. One can recognise an Inhibitor I9 domain in the interval 36–118 (KYIVVMNDGM…YIERDARVQI (83 aa)). A glycan (N-linked (GlcNAc...) asparagine) is linked at asparagine 58. A Peptidase S8 domain is found at 129–401 (SWGLARVGSR…SKLINNGSGM (273 aa)). Active-site charge relay system residues include aspartate 161 and histidine 193. Residues asparagine 223 and asparagine 253 are each glycosylated (N-linked (GlcNAc...) asparagine). The active-site Charge relay system is the serine 347. Asparagine 397 is a glycosylation site (N-linked (GlcNAc...) asparagine).

Belongs to the peptidase S8 family.

It is found in the secreted. Its function is as follows. Secreted subtilisin-like serine protease with keratinolytic activity that contributes to pathogenicity. This Trichophyton equinum (Horse ringworm fungus) protein is Subtilisin-like protease 7 (SUB7).